Consider the following 192-residue polypeptide: Ion-translocating oxidoreductase complex subunit A (192 aa).

6 consecutive transmembrane segments (helical) span residues 5–25, 38–58, 72–92, 102–122, 134–154, and 171–191; these read LLLL…FLGL, AIGM…LSFL, LRTM…EMLV, ALGI…VALL, AIYG…FSAM, and AIAM…AGLI.

The protein belongs to the NqrDE/RnfAE family. The complex is composed of six subunits: RnfA, RnfB, RnfC, RnfD, RnfE and RnfG.

Its subcellular location is the cell inner membrane. Functionally, part of a membrane-bound complex that couples electron transfer with translocation of ions across the membrane. This chain is Ion-translocating oxidoreductase complex subunit A, found in Shewanella denitrificans (strain OS217 / ATCC BAA-1090 / DSM 15013).